Here is a 190-residue protein sequence, read N- to C-terminus: B3 domain-containing protein At1g49475 (190 aa).

Residues 1–27 form a disordered region; sequence MRNMHTNRRSPGPITSAATQRRLKPEP. Residues 33-125 constitute a DNA-binding region (TF-B3); the sequence is KFIKIILLSR…CFRVVIFDVS (93 aa).

The protein localises to the nucleus. This chain is B3 domain-containing protein At1g49475, found in Arabidopsis thaliana (Mouse-ear cress).